A 131-amino-acid polypeptide reads, in one-letter code: Profilin-1 (131 aa).

This sequence belongs to the profilin family. As to quaternary structure, occurs in many kinds of cells as a complex with monomeric actin in a 1:1 ratio. As to expression, expressed at low levels roots, leaves, stems, flowers and siliques. Expressed in leaf epidermal cells, trichomes and stem epidermal cells. Detected in phloem exudates (at protein level).

The protein resides in the cytoplasm. Its subcellular location is the cytoskeleton. Binds to actin monomers and regulates the organization of the actin cytoskeleton. At high concentrations, profilin prevents the polymerization of actin, whereas it enhances it at low concentrations. At low concentrations, associates with the poly-proline motif of formins to enhance actin filament elongation rate. Binds ACT1, ACT7 and ACT11 and inhibits actin polymerization. Coordinates the stochastic dynamic properties of actin filaments by modulating formin-mediated actin nucleation and assembly during axial cell expansion. Binds G-actin and poly-L-proline in vitro. Inhibits cell growth of various pathogenic fungal strains. May play a role as antifungal proteins in the defense system against fungal pathogen attacks. The chain is Profilin-1 from Arabidopsis thaliana (Mouse-ear cress).